The sequence spans 446 residues: Phosphoglucosamine mutase (446 aa).

The active-site Phosphoserine intermediate is the serine 101. Residues serine 101, aspartate 240, aspartate 242, and aspartate 244 each coordinate Mg(2+). Serine 101 carries the post-translational modification Phosphoserine.

Belongs to the phosphohexose mutase family. Requires Mg(2+) as cofactor. Activated by phosphorylation.

It carries out the reaction alpha-D-glucosamine 1-phosphate = D-glucosamine 6-phosphate. Catalyzes the conversion of glucosamine-6-phosphate to glucosamine-1-phosphate. This chain is Phosphoglucosamine mutase, found in Pseudomonas putida (strain ATCC 47054 / DSM 6125 / CFBP 8728 / NCIMB 11950 / KT2440).